The primary structure comprises 281 residues: Diaminopimelate epimerase (281 aa).

3 residues coordinate substrate: N13, Q46, and N66. The active-site Proton donor is the C75. Residues 76–77 (GN), N160, N193, and 211–212 (ER) contribute to the substrate site. C220 functions as the Proton acceptor in the catalytic mechanism. 221 to 222 (GT) is a substrate binding site.

This sequence belongs to the diaminopimelate epimerase family. As to quaternary structure, homodimer.

It is found in the cytoplasm. The enzyme catalyses (2S,6S)-2,6-diaminopimelate = meso-2,6-diaminopimelate. It functions in the pathway amino-acid biosynthesis; L-lysine biosynthesis via DAP pathway; DL-2,6-diaminopimelate from LL-2,6-diaminopimelate: step 1/1. In terms of biological role, catalyzes the stereoinversion of LL-2,6-diaminopimelate (L,L-DAP) to meso-diaminopimelate (meso-DAP), a precursor of L-lysine and an essential component of the bacterial peptidoglycan. This is Diaminopimelate epimerase from Acinetobacter baumannii (strain AB307-0294).